The chain runs to 145 residues: Bacilliredoxin BH2759 (145 aa).

The protein belongs to the bacilliredoxin family.

The sequence is that of Bacilliredoxin BH2759 from Halalkalibacterium halodurans (strain ATCC BAA-125 / DSM 18197 / FERM 7344 / JCM 9153 / C-125) (Bacillus halodurans).